The chain runs to 328 residues: Ketol-acid reductoisomerase (NADP(+)) (328 aa).

A KARI N-terminal Rossmann domain is found at 2–181 (AKIYRETDAD…GFTRVGVIET (180 aa)). NADP(+) contacts are provided by residues 25 to 28 (YGIQ), Arg-48, Ser-52, and 82 to 85 (DMVQ). The active site involves His-107. Gly-133 contacts NADP(+). The KARI C-terminal knotted domain maps to 182–327 (TFAEETETDL…EDLRRLMRSG (146 aa)). 4 residues coordinate Mg(2+): Asp-190, Glu-194, Glu-226, and Glu-230. Ser-251 lines the substrate pocket.

The protein belongs to the ketol-acid reductoisomerase family. It depends on Mg(2+) as a cofactor.

The catalysed reaction is (2R)-2,3-dihydroxy-3-methylbutanoate + NADP(+) = (2S)-2-acetolactate + NADPH + H(+). It catalyses the reaction (2R,3R)-2,3-dihydroxy-3-methylpentanoate + NADP(+) = (S)-2-ethyl-2-hydroxy-3-oxobutanoate + NADPH + H(+). Its pathway is amino-acid biosynthesis; L-isoleucine biosynthesis; L-isoleucine from 2-oxobutanoate: step 2/4. The protein operates within amino-acid biosynthesis; L-valine biosynthesis; L-valine from pyruvate: step 2/4. Functionally, involved in the biosynthesis of branched-chain amino acids (BCAA). Catalyzes an alkyl-migration followed by a ketol-acid reduction of (S)-2-acetolactate (S2AL) to yield (R)-2,3-dihydroxy-isovalerate. In the isomerase reaction, S2AL is rearranged via a Mg-dependent methyl migration to produce 3-hydroxy-3-methyl-2-ketobutyrate (HMKB). In the reductase reaction, this 2-ketoacid undergoes a metal-dependent reduction by NADPH to yield (R)-2,3-dihydroxy-isovalerate. The chain is Ketol-acid reductoisomerase (NADP(+)) from Caldivirga maquilingensis (strain ATCC 700844 / DSM 13496 / JCM 10307 / IC-167).